Consider the following 794-residue polypeptide: Transcription factor TOG1 (794 aa).

Cysteine 18, cysteine 21, cysteine 28, cysteine 34, cysteine 37, and cysteine 44 together coordinate Zn(2+). Positions cysteine 18–cysteine 44 form a DNA-binding region, zn(2)-C6 fungal-type.

Its subcellular location is the nucleus. In terms of biological role, transcriptional activator required for growth on non-fermentable carbon sources and that regulates genes involved in fatty acid utilization. Acts as a direct activator that binds the promoters of oleate utilizing genes, encoded key enzymes in beta-oxidation and NADPH regeneration (POX1, FOX2,POT1 and IDP2), the glyoxylate shunt (MLS1 and ICL1), and gluconeogenesis (PCK1 and FBP1). Also regulates the abundance of peroxisomes that are vital for fatty acid oxidation. The polypeptide is Transcription factor TOG1 (Saccharomyces cerevisiae (strain ATCC 204508 / S288c) (Baker's yeast)).